Consider the following 316-residue polypeptide: Taste receptor type 2 member 3 (316 aa).

The Extracellular segment spans residues 1-7 (MFGFIEG). Residues 8–28 (VFLVLTITEFILGNLVNGFIV) traverse the membrane as a helical segment. At 29 to 50 (SINSSYWFKSKKISLSNFIITS) the chain is on the cytoplasmic side. A helical transmembrane segment spans residues 51–71 (LALFRIFLLWIIFIDSLIIVF). Topologically, residues 72-86 (SYQTHDSGIMMQLID) are extracellular. Residues 87–107 (VFWTFTNHFSIWLISCLSVFY) form a helical membrane-spanning segment. Residues 108-128 (CLKIASFSHPSFLWLKWRASR) are Cytoplasmic-facing. The chain crosses the membrane as a helical span at residues 129-149 (VVVGMLWGALLLSCVSTMSLM). Over 150–186 (NEFKIYSALTRSKDTPNMTEYIRLKRQEYNLMHVLGN) the chain is Extracellular. The N-linked (GlcNAc...) asparagine glycan is linked to Asn166. A helical membrane pass occupies residues 187-207 (LWKIPSLIVSLVAYLLLLLSL). The Cytoplasmic portion of the chain corresponds to 208 to 234 (GKHTQQMQQYSIDSRDQSAEAHKRAMR). Residues 235-255 (IISSFLLFFLFYFLSFMILSS) form a helical membrane-spanning segment. Topologically, residues 256-266 (SRFLPETRIAR) are extracellular. Residues 267–287 (IIGVVISMSYLVGDSFILIVC) traverse the membrane as a helical segment. Residues 288–316 (NNKLKHTFVAMLPCECGHLKPGSKGPSAS) are Cytoplasmic-facing.

This sequence belongs to the G-protein coupled receptor T2R family.

It is found in the membrane. In terms of biological role, gustducin-coupled receptor implicated in the perception of bitter compounds in the oral cavity and the gastrointestinal tract. Signals through PLCB2 and the calcium-regulated cation channel TRPM5. This chain is Taste receptor type 2 member 3 (Tas2r3), found in Mus musculus (Mouse).